The following is a 315-amino-acid chain: Ribosomal RNA small subunit methyltransferase H (315 aa).

Residues 37 to 39 (GGH), Asp57, Leu91, Asp105, and Gln112 each bind S-adenosyl-L-methionine.

This sequence belongs to the methyltransferase superfamily. RsmH family.

Its subcellular location is the cytoplasm. It catalyses the reaction cytidine(1402) in 16S rRNA + S-adenosyl-L-methionine = N(4)-methylcytidine(1402) in 16S rRNA + S-adenosyl-L-homocysteine + H(+). Specifically methylates the N4 position of cytidine in position 1402 (C1402) of 16S rRNA. This is Ribosomal RNA small subunit methyltransferase H from Syntrophus aciditrophicus (strain SB).